Here is a 542-residue protein sequence, read N- to C-terminus: Chaperonin GroEL 3 (542 aa).

Residues 29-32, 86-90, G413, 477-479, and D493 contribute to the ATP site; these read TLGP, DGTTT, and NAA.

This sequence belongs to the chaperonin (HSP60) family. In terms of assembly, forms a cylinder of 14 subunits composed of two heptameric rings stacked back-to-back. Interacts with the co-chaperonin GroES.

The protein localises to the cytoplasm. It carries out the reaction ATP + H2O + a folded polypeptide = ADP + phosphate + an unfolded polypeptide.. In terms of biological role, together with its co-chaperonin GroES, plays an essential role in assisting protein folding. The GroEL-GroES system forms a nano-cage that allows encapsulation of the non-native substrate proteins and provides a physical environment optimized to promote and accelerate protein folding. In Frankia alni (strain DSM 45986 / CECT 9034 / ACN14a), this protein is Chaperonin GroEL 3.